Here is a 388-residue protein sequence, read N- to C-terminus: Flap endonuclease 1 (388 aa).

The segment at 1-104 (MGILGLSKLI…GELAKRAERR (104 aa)) is N-domain. Residue Asp-34 participates in Mg(2+) binding. DNA-binding residues include Arg-47 and Arg-70. The Mg(2+) site is built by Asp-86, Glu-158, Glu-160, Asp-179, and Asp-181. The tract at residues 122-253 (EIEKFNRRLV…KRAIELINSY (132 aa)) is I-domain. Glu-158 serves as a coordination point for DNA. Gly-231 and Asp-233 together coordinate DNA. Asp-233 lines the Mg(2+) pocket. The interval 336–344 (TQVRLDSFF) is interaction with PCNA. Residues 355-388 (AAAKRKAEEAKKSANNKKAKIGGGGGAGRGRRPK) form a disordered region.

The protein belongs to the XPG/RAD2 endonuclease family. FEN1 subfamily. As to quaternary structure, interacts with PCNA. Three molecules of FEN1 bind to one PCNA trimer with each molecule binding to one PCNA monomer. PCNA stimulates the nuclease activity without altering cleavage specificity. It depends on Mg(2+) as a cofactor. In terms of processing, phosphorylated. Phosphorylation upon DNA damage induces relocalization to the nuclear plasma.

Its subcellular location is the nucleus. The protein localises to the nucleolus. It localises to the nucleoplasm. It is found in the mitochondrion. Structure-specific nuclease with 5'-flap endonuclease and 5'-3' exonuclease activities involved in DNA replication and repair. During DNA replication, cleaves the 5'-overhanging flap structure that is generated by displacement synthesis when DNA polymerase encounters the 5'-end of a downstream Okazaki fragment. It enters the flap from the 5'-end and then tracks to cleave the flap base, leaving a nick for ligation. Also involved in the long patch base excision repair (LP-BER) pathway, by cleaving within the apurinic/apyrimidinic (AP) site-terminated flap. Acts as a genome stabilization factor that prevents flaps from equilibrating into structures that lead to duplications and deletions. Also possesses 5'-3' exonuclease activity on nicked or gapped double-stranded DNA, and exhibits RNase H activity. Also involved in replication and repair of rDNA and in repairing mitochondrial DNA. The polypeptide is Flap endonuclease 1 (Drosophila willistoni (Fruit fly)).